We begin with the raw amino-acid sequence, 592 residues long: V-type ATP synthase alpha chain (592 aa).

An ATP-binding site is contributed by 233–240 (GPFGSGKT).

It belongs to the ATPase alpha/beta chains family.

It catalyses the reaction ATP + H2O + 4 H(+)(in) = ADP + phosphate + 5 H(+)(out). Its function is as follows. Produces ATP from ADP in the presence of a proton gradient across the membrane. The V-type alpha chain is a catalytic subunit. This Clostridium botulinum (strain Okra / Type B1) protein is V-type ATP synthase alpha chain.